Reading from the N-terminus, the 446-residue chain is Exodeoxyribonuclease 7 large subunit (446 aa).

This sequence belongs to the XseA family. Heterooligomer composed of large and small subunits.

The protein resides in the cytoplasm. The catalysed reaction is Exonucleolytic cleavage in either 5'- to 3'- or 3'- to 5'-direction to yield nucleoside 5'-phosphates.. Functionally, bidirectionally degrades single-stranded DNA into large acid-insoluble oligonucleotides, which are then degraded further into small acid-soluble oligonucleotides. The chain is Exodeoxyribonuclease 7 large subunit from Streptococcus pneumoniae (strain Taiwan19F-14).